We begin with the raw amino-acid sequence, 462 residues long: DIMBOA UDP-glucosyltransferase BX9 (462 aa).

The active-site Proton acceptor is histidine 24. Residue histidine 24 participates in an anthocyanidin binding. Catalysis depends on aspartate 115, which acts as the Charge relay. Positions 137, 336, 338, 353, 356, 357, 358, and 361 each coordinate UDP-alpha-D-glucose. Glycine 376 contacts an anthocyanidin. UDP-alpha-D-glucose is bound by residues aspartate 377 and glutamine 378.

The protein belongs to the UDP-glycosyltransferase family. It depends on Mg(2+) as a cofactor. Requires Ca(2+) as cofactor. As to expression, expressed at the same levels in roots and shoots.

It catalyses the reaction DIMBOA + UDP-alpha-D-glucose = DIMBOA beta-D-glucoside + UDP + H(+). The catalysed reaction is DIBOA + UDP-alpha-D-glucose = DIBOA beta-D-glucoside + UDP + H(+). Functionally, glucosyltransferase involved in the last step of benzoxazinoid glucoside biosynthesis. Catalyzes the glucosylation of hydroxamic acids utilizing UDP-glucose as glucose doner, reducing the toxicity of these natural insecticides for storage. Can use DIMBOA and DIBOA as substrates, HMBOA (2-hydroxy-7-methoxy-2H-1,4-benzoxazin-3(4H)-one) and HBOA (2-hydroxy-2H-1,4-benzoxazin-3(4H)-one) with a lower efficiency, but not indole acetic acid or quercitin. This Zea mays (Maize) protein is DIMBOA UDP-glucosyltransferase BX9 (BX9).